A 390-amino-acid chain; its full sequence is Tuftelin (390 aa).

Coiled-coil stretches lie at residues 88–126 (DKMT…KLDR) and 163–352 (PSMS…EKQV). The interval 356–383 (NFSTQARAKTENLGSVRISKPPSPKPMP) is disordered.

Belongs to the tuftelin family. In terms of assembly, interacts with TFIP11. May form oligomers. Ameloblasts, and also non-odontogenic tissues including kidney, lung, liver and testis.

The protein localises to the secreted. Involved in the structural organization of the epidermis. Involved in the mineralization and structural organization of enamel. The polypeptide is Tuftelin (Tuft1) (Mus musculus (Mouse)).